Here is a 200-residue protein sequence, read N- to C-terminus: Glycerol-3-phosphate acyltransferase (200 aa).

The next 5 helical transmembrane spans lie at 2–22 (FNIPAVAVSYLIGSLSFAVIV), 51–71 (KAAVLTLLGDAAKGLVAVLLA), 84–104 (AIAAVALAALVGHMWPVFFGF), 114–134 (LGVLLALSPATALVCALIWLV), and 159–179 (FFMPHLSWIWATLLIALLVLF).

It belongs to the PlsY family. Probably interacts with PlsX.

The protein localises to the cell inner membrane. The enzyme catalyses an acyl phosphate + sn-glycerol 3-phosphate = a 1-acyl-sn-glycero-3-phosphate + phosphate. It participates in lipid metabolism; phospholipid metabolism. Catalyzes the transfer of an acyl group from acyl-phosphate (acyl-PO(4)) to glycerol-3-phosphate (G3P) to form lysophosphatidic acid (LPA). This enzyme utilizes acyl-phosphate as fatty acyl donor, but not acyl-CoA or acyl-ACP. This Neisseria meningitidis serogroup C / serotype 2a (strain ATCC 700532 / DSM 15464 / FAM18) protein is Glycerol-3-phosphate acyltransferase.